The chain runs to 184 residues: UPF0301 protein SPO0296 (184 aa).

This sequence belongs to the UPF0301 (AlgH) family.

This is UPF0301 protein SPO0296 from Ruegeria pomeroyi (strain ATCC 700808 / DSM 15171 / DSS-3) (Silicibacter pomeroyi).